We begin with the raw amino-acid sequence, 545 residues long: Chaperonin GroEL 1 (545 aa).

ATP-binding positions include 29–32 (TLGP), 86–90 (DGTTT), Gly-413, 479–481 (DAA), and Asp-495. The interval 525–545 (PEPKENNPAGSGAGMGGDFDY) is disordered. Residues 535–545 (SGAGMGGDFDY) show a composition bias toward gly residues.

It belongs to the chaperonin (HSP60) family. Forms a cylinder of 14 subunits composed of two heptameric rings stacked back-to-back. Interacts with the co-chaperonin GroES.

Its subcellular location is the cytoplasm. It carries out the reaction ATP + H2O + a folded polypeptide = ADP + phosphate + an unfolded polypeptide.. Together with its co-chaperonin GroES, plays an essential role in assisting protein folding. The GroEL-GroES system forms a nano-cage that allows encapsulation of the non-native substrate proteins and provides a physical environment optimized to promote and accelerate protein folding. The polypeptide is Chaperonin GroEL 1 (Thermostichus vulcanus (Synechococcus vulcanus)).